The sequence spans 149 residues: Deoxyuridine 5'-triphosphate nucleotidohydrolase (149 aa).

Residues 68 to 70 (RSG), asparagine 81, 85 to 87 (LID), and methionine 95 contribute to the substrate site.

Belongs to the dUTPase family. Mg(2+) serves as cofactor.

The catalysed reaction is dUTP + H2O = dUMP + diphosphate + H(+). The protein operates within pyrimidine metabolism; dUMP biosynthesis; dUMP from dCTP (dUTP route): step 2/2. Functionally, this enzyme is involved in nucleotide metabolism: it produces dUMP, the immediate precursor of thymidine nucleotides and it decreases the intracellular concentration of dUTP so that uracil cannot be incorporated into DNA. The protein is Deoxyuridine 5'-triphosphate nucleotidohydrolase of Polynucleobacter asymbioticus (strain DSM 18221 / CIP 109841 / QLW-P1DMWA-1) (Polynucleobacter necessarius subsp. asymbioticus).